Here is a 95-residue protein sequence, read N- to C-terminus: SCDFCHNIGKDCDGYEEECSSPEDVCGKNCFSSSICKELCEDQPEPGEPLSKDSTEYEAICKYEQFPGDISYNLKGCVSSCPLLSLSNATFEQNR.

Cystine bridges form between cysteine 2/cysteine 26, cysteine 5/cysteine 12, cysteine 19/cysteine 30, and cysteine 61/cysteine 77.

Forms dimers or higher order oligomers in a temperature-dependent manner in vitro. As to expression, expressed by the liver.

It localises to the secreted. Functionally, inhibits the enzymatic activity of basic and acidic PLA2 from B.jararacussu and B.pauloensis, respectively, in a dose-dependent manner. Also inhibits myotoxicity and cytotoxicity of BnSp-7 of B.pauloensis. The chain is Phospholipase A2 inhibitor gammaCdcPLI from Crotalus durissus collilineatus (Brazilian rattlesnake).